The chain runs to 164 residues: UPF0114 protein Spro_2386 (164 aa).

3 helical membrane passes run 15 to 35 (LLAP…IKFF), 53 to 73 (LVLT…LVMV), and 136 to 156 (LMWY…MGYL).

The protein belongs to the UPF0114 family.

Its subcellular location is the cell membrane. The polypeptide is UPF0114 protein Spro_2386 (Serratia proteamaculans (strain 568)).